The following is a 306-amino-acid chain: Phosphoadenosine phosphosulfate reductase (306 aa).

2 disordered regions span residues 1 to 30 (MPAK…VSGG) and 245 to 266 (YHST…KGQA).

The protein belongs to the PAPS reductase family. CysH subfamily.

It catalyses the reaction [thioredoxin]-disulfide + sulfite + adenosine 3',5'-bisphosphate + 2 H(+) = [thioredoxin]-dithiol + 3'-phosphoadenylyl sulfate. Its pathway is sulfur metabolism; hydrogen sulfide biosynthesis; sulfite from sulfate: step 3/3. In terms of biological role, the NADP dependent reduction of PAPS into sulfite involves thioredoxin which probably plays the role of a thiol carrier. The protein is Phosphoadenosine phosphosulfate reductase (sA) of Emericella nidulans (strain FGSC A4 / ATCC 38163 / CBS 112.46 / NRRL 194 / M139) (Aspergillus nidulans).